A 239-amino-acid chain; its full sequence is mRNA turnover protein 4 homolog (239 aa).

Residues 216-239 (QQMGDDLPESAPESEGESEEEDDS) form a disordered region. Acidic residues predominate over residues 221 to 239 (DLPESAPESEGESEEEDDS). 3 positions are modified to phosphoserine: serine 225, serine 229, and serine 233.

The protein belongs to the universal ribosomal protein uL10 family. In terms of assembly, associates with the pre-60S ribosomal particle. Interacts with MINAS-60 (product of an alternative open reading frame of RBM10).

It localises to the nucleus. The protein resides in the nucleolus. It is found in the cytoplasm. Component of the ribosome assembly machinery. Nuclear paralog of the ribosomal protein P0, it binds pre-60S subunits at an early stage of assembly in the nucleolus, and is replaced by P0 in cytoplasmic pre-60S subunits and mature 80S ribosomes. This is mRNA turnover protein 4 homolog (MRTO4) from Bos taurus (Bovine).